Consider the following 43-residue polypeptide: Protein PsbN 1 (43 aa).

A helical membrane pass occupies residues 3 to 23 (TATILGILIAAAVVGITVLAL).

It belongs to the PsbN family.

It localises to the cellular thylakoid membrane. Its function is as follows. May play a role in photosystem I and II biogenesis. The protein is Protein PsbN 1 of Microcystis aeruginosa (strain NIES-843 / IAM M-2473).